We begin with the raw amino-acid sequence, 249 residues long: Proteasome subunit alpha type-4 (249 aa).

The protein belongs to the peptidase T1A family. In terms of assembly, the 26S proteasome consists of a 20S proteasome core and two 19S regulatory subunits. The 20S proteasome core is composed of 28 subunits that are arranged in four stacked rings, resulting in a barrel-shaped structure. The two end rings are each formed by seven alpha subunits, and the two central rings are each formed by seven beta subunits. The catalytic chamber with the active sites is on the inside of the barrel.

The protein localises to the cytoplasm. The protein resides in the nucleus. In terms of biological role, the proteasome is a multicatalytic proteinase complex which is characterized by its ability to cleave peptides with Arg, Phe, Tyr, Leu, and Glu adjacent to the leaving group at neutral or slightly basic pH. The proteasome has an ATP-dependent proteolytic activity. In Petunia hybrida (Petunia), this protein is Proteasome subunit alpha type-4 (PAC1).